A 266-amino-acid chain; its full sequence is Glutamate racemase (266 aa).

Substrate-binding positions include 9 to 10 (DS) and 41 to 42 (YG). C72 acts as the Proton donor/acceptor in catalysis. 73–74 (NT) is a binding site for substrate. C183 functions as the Proton donor/acceptor in the catalytic mechanism. 184–185 (TH) is a binding site for substrate.

It belongs to the aspartate/glutamate racemases family.

The enzyme catalyses L-glutamate = D-glutamate. It functions in the pathway cell wall biogenesis; peptidoglycan biosynthesis. Its function is as follows. Provides the (R)-glutamate required for cell wall biosynthesis. The protein is Glutamate racemase of Listeria innocua serovar 6a (strain ATCC BAA-680 / CLIP 11262).